An 884-amino-acid chain; its full sequence is Probable LRR receptor-like serine/threonine-protein kinase PAM74 (884 aa).

The signal sequence occupies residues 1-23 (MDSPCWLLLLLLGAFAIIGCVQA). The Extracellular segment spans residues 24-510 (QDQQEFISLD…TEKNSKKKFP (487 aa)). N-linked (GlcNAc...) asparagine glycosylation is found at Asn-143, Asn-182, Asn-200, Asn-256, Asn-289, Asn-400, Asn-403, Asn-417, Asn-433, Asn-444, Asn-465, and Asn-470. LRR repeat units lie at residues 412 to 433 (RVLS…AIQN), 436 to 457 (HLEK…FLAQ), and 460 to 480 (SLVI…QGLR). The helical transmembrane segment at 511–531 (VVIVASVASVAIIVAVLVIIF) threads the bilayer. Residues 532–884 (VLSKKKSSTV…FDTELFPRAR (353 aa)) are Cytoplasmic-facing. Phosphothreonine is present on Thr-570. Residues 579-852 (NNFQRVVGEG…QVANELKECL (274 aa)) enclose the Protein kinase domain. Residues 585–593 (VGEGGFGVV) and Lys-607 contribute to the ATP site. At Tyr-652 the chain carries Phosphotyrosine. Asp-704 acts as the Proton acceptor in catalysis. Phosphoserine is present on Ser-738. A phosphothreonine mark is found at Thr-739 and Thr-744. Tyr-752 carries the post-translational modification Phosphotyrosine.

It belongs to the protein kinase superfamily. Ser/Thr protein kinase family. In terms of assembly, binds to the ammonium transporter AMT1-1.

The protein localises to the membrane. It catalyses the reaction L-seryl-[protein] + ATP = O-phospho-L-seryl-[protein] + ADP + H(+). The catalysed reaction is L-threonyl-[protein] + ATP = O-phospho-L-threonyl-[protein] + ADP + H(+). Its function is as follows. Required for accurate photosynthesis. The protein is Probable LRR receptor-like serine/threonine-protein kinase PAM74 (PAM74) of Arabidopsis thaliana (Mouse-ear cress).